The following is a 234-amino-acid chain: Ubiquinone biosynthesis O-methyltransferase (234 aa).

S-adenosyl-L-methionine contacts are provided by Arg39, Gly59, Asp80, and Met124.

Belongs to the methyltransferase superfamily. UbiG/COQ3 family.

It carries out the reaction a 3-demethylubiquinol + S-adenosyl-L-methionine = a ubiquinol + S-adenosyl-L-homocysteine + H(+). The catalysed reaction is a 3-(all-trans-polyprenyl)benzene-1,2-diol + S-adenosyl-L-methionine = a 2-methoxy-6-(all-trans-polyprenyl)phenol + S-adenosyl-L-homocysteine + H(+). The protein operates within cofactor biosynthesis; ubiquinone biosynthesis. Its function is as follows. O-methyltransferase that catalyzes the 2 O-methylation steps in the ubiquinone biosynthetic pathway. This chain is Ubiquinone biosynthesis O-methyltransferase, found in Aliivibrio fischeri (strain ATCC 700601 / ES114) (Vibrio fischeri).